The sequence spans 198 residues: Synaptobrevin homolog YKT6 (198 aa).

Residues 8-131 (VFYKGEPKAV…ALDGHLSRYQ (124 aa)) form the Longin domain. One can recognise a v-SNARE coiled-coil homology domain in the interval 138–198 (PMSKVQAELD…RKQNSCCAIM (61 aa)). Ser-159 bears the Phosphoserine mark. The S-palmitoyl cysteine moiety is linked to residue Cys-194. Cys-195 is subject to Cysteine methyl ester. Cys-195 is lipidated: S-farnesyl cysteine. A propeptide spans 196–198 (AIM) (removed in mature form).

It belongs to the synaptobrevin family. As to quaternary structure, identified in 2 different SNARE complexes; the first one composed of GOSR1, GOSR2 and STX5 and the second one composed of BET1L, GOSR1 and STX5. Post-translationally, palmitoylated; catalyzes its own palmitoylation. Palmitoylation is required for Golgi targeting. Farnesylation is required for Golgi targeting. In terms of processing, (Microbial infection) Targeted and hydrolyzed by C.botulinum neurotoxin type X (BoNT/X) which hydrolyzes the 173-Lys-|-Ser-174 bond and probably inhibits neurotransmitter release. It remains unknown whether BoNT/X is ever produced, or what organisms it targets. Highly expressed by neurons in brain and faintly detected in spleen, lung and kidney (at protein level). Ubiquitously expressed.

It is found in the cytoplasm. The protein localises to the cytosol. The protein resides in the cytoplasmic vesicle membrane. It localises to the golgi apparatus membrane. Its function is as follows. Vesicular soluble NSF attachment protein receptor (v-SNARE) mediating vesicle docking and fusion to a specific acceptor cellular compartment. Functions in endoplasmic reticulum to Golgi transport; as part of a SNARE complex composed of GOSR1, GOSR2 and STX5. Functions in early/recycling endosome to TGN transport; as part of a SNARE complex composed of BET1L, GOSR1 and STX5. Has a S-palmitoyl transferase activity. The polypeptide is Synaptobrevin homolog YKT6 (Ykt6) (Rattus norvegicus (Rat)).